The following is a 233-amino-acid chain: Probable 2-phosphosulfolactate phosphatase (233 aa).

It belongs to the ComB family. It depends on Mg(2+) as a cofactor.

The catalysed reaction is (2R)-O-phospho-3-sulfolactate + H2O = (2R)-3-sulfolactate + phosphate. This Clostridium tetani (strain Massachusetts / E88) protein is Probable 2-phosphosulfolactate phosphatase.